The sequence spans 1072 residues: Zinc finger MIZ domain-containing protein 1 (1072 aa).

Residues M1–P120 form a sufficient for transactivation activity; sufficient for interaction with NOTCH1 region. K91 participates in a covalent cross-link: Glycyl lysine isopeptide (Lys-Gly) (interchain with G-Cter in SUMO2). Disordered regions lie at residues Q112–H141 and T362–S538. Residues P128–H141 are compositionally biased toward low complexity. The span at Y419–Q436 shows a compositional bias: polar residues. The span at Y437 to L446 shows a compositional bias: pro residues. Residues S489–S501 are compositionally biased toward low complexity. Pro residues predominate over residues S517–T528. The SP-RING-type zinc finger occupies G734 to H815. Zn(2+) contacts are provided by C765, H767, C788, and C791. Glycyl lysine isopeptide (Lys-Gly) (interchain with G-Cter in SUMO2) cross-links involve residues K841 and K850. The transactivation domain stretch occupies residues P844–N1072. Over residues G875–G886 the composition is skewed to pro residues. The interval G875 to N1072 is disordered. Composition is skewed to polar residues over residues T888 to G902 and S958 to Q968. Residues A988–A1001 are compositionally biased toward pro residues. Positions P1045–N1072 are enriched in low complexity.

As to quaternary structure, interacts with AR, but not with ESR1, NR3C1, PGR, THRB nor VDR. Interacts with NOTCH1 and RBPJ. Interacts with SMARCA4. Interacts (via SP-RING-type domain) with SMAD3 and SMAD4 (via MH2 domain). As to expression, expressed in brain.

The protein resides in the nucleus. Its subcellular location is the nucleoplasm. It localises to the cytoplasm. In terms of biological role, acts as a transcriptional coactivator. Increases ligand-dependent transcriptional activity of AR and promotes AR sumoylation. The stimulation of AR activity is dependent upon sumoylation. Also functions as a transcriptional coactivator in the TGF-beta signaling pathway by increasing the activity of the SMAD3/SMAD4 transcriptional complex. Involved in transcriptional activation of a subset of NOTCH1 target genes including MYC. Involved in thymocyte and T cell development. Involved in the regulation of postmitotic positioning of pyramidal neurons in the developing cerebral cortex. The protein is Zinc finger MIZ domain-containing protein 1 (Zmiz1) of Mus musculus (Mouse).